Reading from the N-terminus, the 445-residue chain is Na(+)-translocating NADH-quinone reductase subunit A (445 aa).

The protein belongs to the NqrA family. Composed of six subunits; NqrA, NqrB, NqrC, NqrD, NqrE and NqrF.

The catalysed reaction is a ubiquinone + n Na(+)(in) + NADH + H(+) = a ubiquinol + n Na(+)(out) + NAD(+). Functionally, NQR complex catalyzes the reduction of ubiquinone-1 to ubiquinol by two successive reactions, coupled with the transport of Na(+) ions from the cytoplasm to the periplasm. NqrA to NqrE are probably involved in the second step, the conversion of ubisemiquinone to ubiquinol. The sequence is that of Na(+)-translocating NADH-quinone reductase subunit A from Pseudomonas aeruginosa (strain ATCC 15692 / DSM 22644 / CIP 104116 / JCM 14847 / LMG 12228 / 1C / PRS 101 / PAO1).